The following is a 273-amino-acid chain: Shikimate dehydrogenase (NADP(+)) (273 aa).

Shikimate-binding positions include 18-20 (SKS) and Thr65. Catalysis depends on Lys69, which acts as the Proton acceptor. Residue Glu81 coordinates NADP(+). Residues Asn90 and Asp105 each coordinate shikimate. NADP(+)-binding positions include 130–134 (GAGGA), 154–159 (NRTHSK), and Met217. Residue Tyr219 coordinates shikimate. Position 240 (Gly240) interacts with NADP(+).

This sequence belongs to the shikimate dehydrogenase family. In terms of assembly, homodimer.

The enzyme catalyses shikimate + NADP(+) = 3-dehydroshikimate + NADPH + H(+). It participates in metabolic intermediate biosynthesis; chorismate biosynthesis; chorismate from D-erythrose 4-phosphate and phosphoenolpyruvate: step 4/7. In terms of biological role, involved in the biosynthesis of the chorismate, which leads to the biosynthesis of aromatic amino acids. Catalyzes the reversible NADPH linked reduction of 3-dehydroshikimate (DHSA) to yield shikimate (SA). This is Shikimate dehydrogenase (NADP(+)) from Janthinobacterium sp. (strain Marseille) (Minibacterium massiliensis).